Reading from the N-terminus, the 228-residue chain is Translin (228 aa).

The interval 86–90 is DNA/RNA binding; it reads RFHEH. Positions 177-198 are leucine-zipper; the sequence is LDSGFRLLNLKNDSLRKRYDGL. An N6-acetyllysine modification is found at lysine 187. A Phosphoserine modification is found at serine 190. Position 199 is an N6-acetyllysine (lysine 199).

The protein belongs to the translin family. As to quaternary structure, ring-shaped heterooctamer of six TSN and two TSNAX subunits, DNA/RNA binding occurs inside the ring.

Its subcellular location is the cytoplasm. It is found in the nucleus. Functionally, DNA-binding protein that specifically recognizes consensus sequences at the breakpoint junctions in chromosomal translocations, mostly involving immunoglobulin (Ig)/T-cell receptor gene segments. Seems to recognize single-stranded DNA ends generated by staggered breaks occurring at recombination hot spots. Exhibits both single-stranded and double-stranded endoribonuclease activity. May act as an activator of RNA-induced silencing complex (RISC) by facilitating endonucleolytic cleavage of the siRNA passenger strand. The chain is Translin (TSN) from Cricetulus griseus (Chinese hamster).